A 674-amino-acid polypeptide reads, in one-letter code: Probable copper-transporting P-type ATPase B (674 aa).

Positions 1 to 22 (MNHSNQMHHDNHESHNHHSGHA) are disordered. The segment covering 7-16 (MHHDNHESHN) has biased composition (basic and acidic residues). Transmembrane regions (helical) follow at residues 32 to 52 (FFVSLIFAIPIILLSPLMGIN), 57 to 77 (FTFPGSEWVVLILSTILFFYG), 95 to 115 (GMMTLVALGISVAYIYSLYAF), 127 to 147 (TMDFFWELATLILIMLLGHWI), 284 to 304 (GYLFYFAVIVGVISFIVWMLI), and 315 to 335 (LVTVLVIACPHALGLAIPLVT). Asp367 functions as the 4-aspartylphosphate intermediate in the catalytic mechanism. Residues Asp565 and Asp569 each coordinate Mg(2+). 2 helical membrane-spanning segments follow: residues 623 to 645 (LWWGAGYNIVAVPLAAGALAFVG) and 649 to 671 (SPAVGAILMSLSTVIVAINAFTL).

It belongs to the cation transport ATPase (P-type) (TC 3.A.3) family. Type IB subfamily.

It localises to the cell membrane. The enzyme catalyses Cu(+)(in) + ATP + H2O = Cu(+)(out) + ADP + phosphate + H(+). Involved in copper transport. This chain is Probable copper-transporting P-type ATPase B (copB), found in Staphylococcus epidermidis (strain ATCC 12228 / FDA PCI 1200).